The primary structure comprises 387 residues: 3-ketoacyl-CoA thiolase (387 aa).

Residue Cys91 is the Acyl-thioester intermediate of the active site. Active-site proton acceptor residues include His343 and Cys373.

It belongs to the thiolase-like superfamily. Thiolase family. As to quaternary structure, heterotetramer of two alpha chains (FadB) and two beta chains (FadA).

The protein localises to the cytoplasm. The enzyme catalyses an acyl-CoA + acetyl-CoA = a 3-oxoacyl-CoA + CoA. It participates in lipid metabolism; fatty acid beta-oxidation. Its function is as follows. Catalyzes the final step of fatty acid oxidation in which acetyl-CoA is released and the CoA ester of a fatty acid two carbons shorter is formed. The protein is 3-ketoacyl-CoA thiolase of Shigella boydii serotype 4 (strain Sb227).